Reading from the N-terminus, the 150-residue chain is Ribosome maturation factor RimP (150 aa).

The protein belongs to the RimP family.

It localises to the cytoplasm. Required for maturation of 30S ribosomal subunits. In Salmonella dublin (strain CT_02021853), this protein is Ribosome maturation factor RimP.